The following is a 182-amino-acid chain: Isopentenyl-diphosphate Delta-isomerase (182 aa).

The Mn(2+) site is built by His25 and His32. The Nudix hydrolase domain maps to 30-164 (LLHLAFSSWL…PWAFSPWMVM (135 aa)). Cys67 is an active-site residue. Cys67 serves as a coordination point for Mg(2+). A Mn(2+)-binding site is contributed by His69. Glu87 contributes to the Mg(2+) binding site. Positions 114 and 116 each coordinate Mn(2+). Glu116 is an active-site residue.

The protein belongs to the IPP isomerase type 1 family. In terms of assembly, homodimer. The cofactor is Mg(2+). Mn(2+) is required as a cofactor.

It is found in the cytoplasm. It catalyses the reaction isopentenyl diphosphate = dimethylallyl diphosphate. It participates in isoprenoid biosynthesis; dimethylallyl diphosphate biosynthesis; dimethylallyl diphosphate from isopentenyl diphosphate: step 1/1. In terms of biological role, catalyzes the 1,3-allylic rearrangement of the homoallylic substrate isopentenyl (IPP) to its highly electrophilic allylic isomer, dimethylallyl diphosphate (DMAPP). This Escherichia coli O6:H1 (strain CFT073 / ATCC 700928 / UPEC) protein is Isopentenyl-diphosphate Delta-isomerase.